We begin with the raw amino-acid sequence, 466 residues long: Chromosomal replication initiator protein DnaA (466 aa).

Residues 1–85 form a domain I, interacts with DnaA modulators region; the sequence is MSLSLWQHCL…FEVGNKPVSA (85 aa). The disordered stretch occupies residues 82 to 122; that stretch reads PVSARTTESVPKTVTHPAVNSTPTNSQPVRPSWDNQPQSQL. Residues 85-122 are compositionally biased toward polar residues; the sequence is ARTTESVPKTVTHPAVNSTPTNSQPVRPSWDNQPQSQL. Residues 85–129 are domain II; sequence ARTTESVPKTVTHPAVNSTPTNSQPVRPSWDNQPQSQLPELNYRS. A domain III, AAA+ region region spans residues 130 to 346; it reads NVNPKHKFDN…GALNRVIANA (217 aa). ATP is bound by residues Gly-174, Gly-176, Lys-177, and Thr-178. Positions 347–466 are domain IV, binds dsDNA; the sequence is NFTGRAITID…FSNLIRTLSS (120 aa).

This sequence belongs to the DnaA family. Oligomerizes as a right-handed, spiral filament on DNA at oriC.

The protein localises to the cytoplasm. Its function is as follows. Plays an essential role in the initiation and regulation of chromosomal replication. ATP-DnaA binds to the origin of replication (oriC) to initiate formation of the DNA replication initiation complex once per cell cycle. Binds the DnaA box (a 9 base pair repeat at the origin) and separates the double-stranded (ds)DNA. Forms a right-handed helical filament on oriC DNA; dsDNA binds to the exterior of the filament while single-stranded (ss)DNA is stabiized in the filament's interior. The ATP-DnaA-oriC complex binds and stabilizes one strand of the AT-rich DNA unwinding element (DUE), permitting loading of DNA polymerase. After initiation quickly degrades to an ADP-DnaA complex that is not apt for DNA replication. Binds acidic phospholipids. This is Chromosomal replication initiator protein DnaA from Proteus mirabilis (strain HI4320).